We begin with the raw amino-acid sequence, 201 residues long: Small ribosomal subunit protein uS4B (201 aa).

The S4 RNA-binding domain maps to 93 to 156; sequence QRLDTVVYRL…RSLAVVRESL (64 aa).

Belongs to the universal ribosomal protein uS4 family. In terms of assembly, part of the 30S ribosomal subunit. Contacts protein S5. The interaction surface between S4 and S5 is involved in control of translational fidelity.

In terms of biological role, one of the primary rRNA binding proteins, it binds directly to 16S rRNA where it nucleates assembly of the body of the 30S subunit. Functionally, with S5 and S12 plays an important role in translational accuracy. This chain is Small ribosomal subunit protein uS4B, found in Symbiobacterium thermophilum (strain DSM 24528 / JCM 14929 / IAM 14863 / T).